A 142-amino-acid chain; its full sequence is Deoxyuridine 5'-triphosphate nucleotidohydrolase (142 aa).

It belongs to the dUTPase family. The cofactor is Mg(2+).

It catalyses the reaction dUTP + H2O = dUMP + diphosphate + H(+). Functionally, this enzyme is involved in nucleotide metabolism: it produces dUMP, the immediate precursor of thymidine nucleotides and it decreases the intracellular concentration of dUTP so that uracil cannot be incorporated into DNA. The sequence is that of Deoxyuridine 5'-triphosphate nucleotidohydrolase (DUT) from Swinepox virus (strain Kasza) (SWPV).